We begin with the raw amino-acid sequence, 668 residues long: MATRRELANAIRFLSMDAVQKAKSGHPGAPMGMADIAEVLWRDFLKHNPSNPHWADRDRFILSNGHGSMLIYSLLHLSGYDLSIEDLKQFRQLHSKTPGHPEYGYAPGVETTTGPLGQGITNAVGFAIAEKTLAHQFNRPGHEIVDHHTYVFLGDGCLMEGISHEACSLAGTLGLGKLIAFYDDNNISIDGHVDGWFTDDTQKRFEAYGWHVIPAVDGHNPEQILEAVKQAQAETTKPTLIICKTIIGYGSPNKANSHDCHGAPLGDDEIAAAREFLKWEHAPFEIPAEIYAQWDAKEKGQVAEKAWEEKLAAYAKAYPELAAEFTRRVNAELPANWAAESQAFIEHLQANPANIASRKASQNAIEAYAKLLPEFLGGSADLASSNLTLWSGSKPIRAVENADGNYINYGVREFGMSAIMNGIALHGGFIPYGATFLMFMEYAHNAVRMAALMKQRSLFVYTHDSIGLGEDGPTHQPVEQTSALRLIPNLETWRPCDQVESAVAWKAAVERKEGPSALIFTRQNLAQMDRTAEQLANVARGGYVLRHCCENQNCPDLILIATGSEVELAMKAADVLDAEGVKVRVVSMPSTNVFDKQDAAYRESVLPSHITKRVAIEAGIADFWYKYVGFEGRVVGMNSFGESAPADQLFKLFGFTVENIVEKAKAIL.

His26 serves as a coordination point for substrate. Residues His66 and 114 to 116 (GPL) each bind thiamine diphosphate. Residue Asp155 participates in Mg(2+) binding. Positions 156 and 185 each coordinate thiamine diphosphate. Mg(2+) is bound by residues Asn185 and Ile187. The substrate site is built by His261, Arg358, and Ser385. His261 is a thiamine diphosphate binding site. Catalysis depends on Glu413, which acts as the Proton donor. Phe439 serves as a coordination point for thiamine diphosphate. 3 residues coordinate substrate: His463, Asp471, and Arg522.

The protein belongs to the transketolase family. In terms of assembly, homodimer. Requires Mg(2+) as cofactor. Ca(2+) is required as a cofactor. Mn(2+) serves as cofactor. It depends on Co(2+) as a cofactor. The cofactor is thiamine diphosphate.

It catalyses the reaction D-sedoheptulose 7-phosphate + D-glyceraldehyde 3-phosphate = aldehydo-D-ribose 5-phosphate + D-xylulose 5-phosphate. Functionally, catalyzes the transfer of a two-carbon ketol group from a ketose donor to an aldose acceptor, via a covalent intermediate with the cofactor thiamine pyrophosphate. This Pasteurella multocida (strain Pm70) protein is Transketolase 1 (tktA).